Consider the following 1198-residue polypeptide: MTKKPGGPGKNRAINMLKRGLPRVFPLVGVKRVVMSLLDGRGPVRFVLALITFFKFTALAPTKALLGRWKAVEKSVAMKHLTSFKRELGTLIDAVNKRGRKQNKRGGNEGSIMWLASLAVVIACAGAMKLSNFQGKLLMTINNTDIADVIVIPTSKGENRCWVRAIDVGYMCEDTITYECPKLTMGNDPEDVDCWCDNQEVYVQYGRCTRTRHSKRSRRSVSVQTHGESSLVNKKEAWLDSTKATRYLMKTENWIIRNPGYAFLAAVLGWMLGSNNGQRVVFTILLLLVAPAYSFNCLGMGNRDFIEGASGATWVDLVLEGDSCLTIMANDKPTLDVRMINIEASQLAEVRSYCYHASVTDISTVARCPTTGEAHNEKRADSSYVCKQGFTDRGWGNGCGLFGKGSIDTCAKFSCTSKAIGRTIQPENIKYEVGIFVHGTTTSENHGNYSAQVGASQAAKFTVTPNAPSITLKLGDYGEVTLDCEPRSGLNTEAFYVMTVGSKSFLVHREWFHDLALPWTSPSSTAWRNRELLMEFEGAHATKQSVVALGSQEGGLHQALAGAIVVEYSSSVKLTSGHLKCRLKMDKLALKGTTYGMCTEKFSFAKNPVDTGHGTVVIELSYSGSDGPCKIPIVSVASLNDMTPVGRLVTVNPFVATSSANSKVLVEMEPPFGDSYIVVGRGDKQINHHWHKAGSTLGKAFSTTLKGAQRLAALGDTAWDFGSIGGVFNSIGRAVHQVFGGAFRTLFGGMSWITQGLMGALLLWMGVNARDRSIALAFLATGGVLVFLATNVHADTGCAIDITRKEMRCGSGIFVHNDVEAWVDRYKYLPETPRSLAKIVHKAHKEGVCGVRSVTRLEHQMWEAVRDELNVLLKENAVDLSVVVNKPVGRYRSAPKRLSMTQEKFEMGWKAWGKSILFAPELANSTFVVDGPETKECPDEHRAWNSMQIEDFGFGITSTRVWLKIREESTDECDGAIIGTAVKGHVAVHSDLSYWIESRYNDTWKLERAVFGEVKSCTWPETHTLWGDDVEESELIIPHTIAGPKSKHNRREGYKTQNQGPWDENGIVLDFDYCPGTKVTITEDCSKRGPSVRTTTDSGKLITDWCCRSCSLPPLRFRTENGCWYGMEIRPVMHDETTLVRSQVDAFKGEMVDPFSAGPSGDVSGHPGSPSQEVDGQIDHSCGFGGPTCADAWGYHLH.

Residues threonine 2–asparagine 15 are interaction with host EXOC1. Positions leucine 37–valine 72 are hydrophobic; homodimerization of capsid protein C. Positions glycine 106–alanine 127 are cleaved as a propeptide — ER anchor for the capsid protein C, removed in mature form by serine protease NS3. Residues glycine 110 to leucine 130 traverse the membrane as a helical segment. Residue asparagine 142 is glycosylated (N-linked (GlcNAc...) asparagine; by host). Transmembrane regions (helical) follow at residues tryptophan 254–serine 274 and valine 280–serine 294. 6 cysteine pairs are disulfide-bonded: cysteine 297–cysteine 324, cysteine 354–cysteine 410, cysteine 354–cysteine 415, cysteine 368–cysteine 399, cysteine 386–cysteine 410, and cysteine 386–cysteine 415. The segment at aspartate 392–glycine 405 is fusion peptide. A glycan (N-linked (GlcNAc...) asparagine; by host) is linked at asparagine 448. Disulfide bonds link cysteine 484-cysteine 581 and cysteine 598-cysteine 629. The next 2 membrane-spanning stretches (helical) occupy residues phenylalanine 747–valine 767 and isoleucine 774–alanine 794. 6 cysteine pairs are disulfide-bonded: cysteine 798/cysteine 809, cysteine 849/cysteine 937, cysteine 973/cysteine 1017, cysteine 1074/cysteine 1123, cysteine 1085/cysteine 1106, and cysteine 1107/cysteine 1110. Residues asparagine 924 and asparagine 1001 are each glycosylated (N-linked (GlcNAc...) asparagine; by host). Residues methionine 1151–glutamine 1177 form a disordered region.

Homodimer. Interacts (via N-terminus) with host EXOC1 (via C-terminus); this interaction results in EXOC1 degradation through the proteasome degradation pathway. Interacts with host CAPRIN1; this interaction is involved in the suppression of the integrated stress response. In terms of assembly, forms heterodimers with envelope protein E in the endoplasmic reticulum and Golgi. As to quaternary structure, homodimer; in the endoplasmic reticulum and Golgi. Interacts with protein prM. Interacts with non-structural protein 1. Post-translationally, genome polyprotein: Specific enzymatic cleavages in vivo yield mature proteins. Cleavages in the lumen of endoplasmic reticulum are performed by host signal peptidase, whereas cleavages in the cytoplasmic side are performed by serine protease NS3. Signal cleavage at the 2K-4B site requires a prior NS3 protease-mediated cleavage at the 4A-2K site. In terms of processing, cleaved in post-Golgi vesicles by a host furin, releasing the mature small envelope protein M, and peptide pr. This cleavage is incomplete as up to 30% of viral particles still carry uncleaved prM. N-glycosylated.

It is found in the secreted. Its subcellular location is the virion membrane. The protein localises to the host endoplasmic reticulum membrane. Plays a role in virus budding by binding to the cell membrane and gathering the viral RNA into a nucleocapsid that forms the core of a mature virus particle. During virus entry, may induce genome penetration into the host cytoplasm after hemifusion induced by the surface proteins. Can migrate to the cell nucleus where it modulates host functions. Overcomes the anti-viral effects of host EXOC1 by sequestering and degrading the latter through the proteasome degradation pathway. Inhibits the integrated stress response (ISR) in the infected cell by binding to host CAPRIN1. Its function is as follows. Inhibits RNA silencing by interfering with host Dicer. In terms of biological role, prevents premature fusion activity of envelope proteins in trans-Golgi by binding to envelope protein E at pH6.0. After virion release in extracellular space, gets dissociated from E dimers. Functionally, acts as a chaperone for envelope protein E during intracellular virion assembly by masking and inactivating envelope protein E fusion peptide. prM is the only viral peptide matured by host furin in the trans-Golgi network probably to avoid catastrophic activation of the viral fusion activity in acidic Golgi compartment prior to virion release. prM-E cleavage is inefficient, and many virions are only partially matured. These uncleaved prM would play a role in immune evasion. May play a role in virus budding. Exerts cytotoxic effects by activating a mitochondrial apoptotic pathway through M ectodomain. May display a viroporin activity. Its function is as follows. Binds to host cell surface receptor and mediates fusion between viral and cellular membranes. Envelope protein is synthesized in the endoplasmic reticulum in the form of heterodimer with protein prM. They play a role in virion budding in the ER, and the newly formed immature particle is covered with 60 spikes composed of heterodimer between precursor prM and envelope protein E. The virion is transported to the Golgi apparatus where the low pH causes dissociation of PrM-E heterodimers and formation of E homodimers. prM-E cleavage is inefficient, and many virions are only partially matured. These uncleaved prM would play a role in immune evasion. In terms of biological role, may play a role in neuroinvasiveness. This is Structural polyprotein from Ardeidae (herons).